Reading from the N-terminus, the 112-residue chain is Large ribosomal subunit protein eL33w (112 aa).

Belongs to the eukaryotic ribosomal protein eL33 family.

The protein is Large ribosomal subunit protein eL33w (RPL35AA) of Arabidopsis thaliana (Mouse-ear cress).